We begin with the raw amino-acid sequence, 570 residues long: NADPH oxidase 2 (570 aa).

Residues 2–9 are Cytoplasmic-facing; the sequence is GNWAVNEG. The chain crosses the membrane as a helical span at residues 10–36; sequence LSIFVILVWLGLNVFLFINYYKVYDDG. Residues 37–46 lie on the Extracellular side of the membrane; the sequence is PKYNYTRKLL. An N-linked (GlcNAc...) asparagine glycan is attached at asparagine 40. The helical transmembrane segment at 47–72 threads the bilayer; the sequence is GSALALARAPAACLNFNCMLILLPVC. Residues 54–286 form the Ferric oxidoreductase domain; that stretch reads RAPAACLNFN…MFLYLCERLV (233 aa). The Cytoplasmic segment spans residues 73 to 95; that stretch reads RNLLSFLRGSSACCSTRIRRQLD. A helical transmembrane segment spans residues 96 to 130; it reads RNLTFHKMVAWMIALHTAIHTIAHLFNVEWCVNAR. Residues histidine 101 and histidine 115 each contribute to the heme b site. Over 131-163 the chain is Extracellular; the sequence is VGISDRYSIALSDIGDNENEEYLNFAREKIKNP. Residues lysine 159 and lysine 161 each participate in a glycyl lysine isopeptide (Lys-Gly) (interchain with G-Cter in ubiquitin) cross-link. The chain crosses the membrane as a helical span at residues 164-194; that stretch reads EGGLYVAVTRLAGITGIVITLCLILIITSST. Residues 195 to 203 are Cytoplasmic-facing; it reads KTIRRSYFE. FAD-binding residues include arginine 199 and serine 200. A helical transmembrane segment spans residues 204–222; that stretch reads VFWYTHHLFVIFFIGLAIH. Residues tryptophan 206, histidine 209, histidine 222, arginine 226, and isoleucine 227 each coordinate heme b. The Extracellular segment spans residues 223 to 267; that stretch reads GAERIVRGQTAESLEEHNLDICADKIEEWGKIKECPVPKFAGNPP. A Glycyl lysine isopeptide (Lys-Gly) (interchain with G-Cter in ubiquitin) cross-link involves residue lysine 255. Methionine 268, tyrosine 280, and arginine 287 together coordinate heme b. Residues 268–285 traverse the membrane as a helical segment; the sequence is MTWKWIVGPMFLYLCERL. At 286-570 the chain is on the cytoplasmic side; that stretch reads VRFWRSQQKV…VHFIFNKENF (285 aa). The FAD-binding FR-type domain occupies 287–397; sequence RFWRSQQKVV…DGPFGTASED (111 aa). Residues lysine 294, lysine 299, lysine 306, lysine 328, and lysine 334 each participate in a glycyl lysine isopeptide (Lys-Gly) (interchain with G-Cter in ubiquitin) cross-link. Tryptophan 337, histidine 338, proline 339, threonine 341, histidine 354, arginine 356, tryptophan 361, and threonine 362 together coordinate FAD. Residue lysine 381 forms a Glycyl lysine isopeptide (Lys-Gly) (interchain with G-Cter in ubiquitin) linkage. Positions 411, 446, and 481 each coordinate NADPH. Lysine 506 participates in a covalent cross-link: Glycyl lysine isopeptide (Lys-Gly) (interchain with G-Cter in ubiquitin). Arginine 513 is an NADPH binding site. Residue lysine 567 forms a Glycyl lysine isopeptide (Lys-Gly) (interchain with G-Cter in ubiquitin) linkage.

Component of the phagocyte NADPH oxidase core complex/cytochrome b558 complex, composed of CYBB (heavy chain (beta)) and CYBA (light chain (alpha)). Component of the phagocyte NADPH oxidase complex composed of an obligatory core heterodimer formed by the membrane proteins CYBA and CYBB and the cytosolic regulatory subunits NCF1/p47-phox, NCF2/p67-phox, NCF4/p40-phox and the small GTPase RAC1 or RAC2. Interacts with NCF1 (phosphorylated form). Interacts with NCF2; the interaction is enhanced in the presence of GBP7. Interacts with RAC2. Interacts with RAC1. Interacts with calprotectin (S100A8/9). Interacts with NRROS; the interaction is direct and impairs formation of a stable NADPH oxidase complex. Interacts with CYBC1; CYBC1 may act as a chaperone stabilizing Cytochrome b-245 heterodimer. The CYBA:CYBB complex interacts with GBP7. Requires FAD as cofactor. Post-translationally, glycosylated. Phosphorylated on Ser and Thr residues by PKC during neutrophils activation. Phosphorylation enhances the NADPH oxidase activity and stimulates its interaction with RAC2, NCF2/p67-phox, and NCF1/p47-phox. In terms of processing, undergoes 'Lys-48'-linked polyubiquitination, likely by RNF145, triggering endoplasmic reticulum-associated degradation.

It localises to the cell membrane. It carries out the reaction NADPH + 2 O2 = 2 superoxide + NADP(+) + H(+). Functionally, catalytic subunit of the phagocyte NADPH oxidase complex that mediates the transfer of electrons from cytosolic NADPH to O2 to produce the superoxide anion (O2(-)). In the activated complex, electrons are first transferred from NADPH to flavin adenine dinucleotide (FAD) and subsequently transferred via two heme molecules to molecular oxygen, producing superoxide through an outer-sphere reaction. Activation of the NADPH oxidase complex is initiated by the assembly of cytosolic subunits of the NADPH oxidase complex with the core NADPH oxidase complex to form a complex at the plasma membrane or phagosomal membrane. This activation process is initiated by phosphorylation dependent binding of the cytosolic NCF1/p47-phox subunit to the C-terminus of CYBA/p22-phox. NADPH oxidase complex assembly is impaired through interaction with NRROS. The chain is NADPH oxidase 2 from Mus musculus (Mouse).